The sequence spans 359 residues: 1-deoxy-D-xylulose 5-phosphate reductoisomerase (359 aa).

NADPH is bound by residues threonine 7, glycine 8, serine 9, isoleucine 10, alanine 31, asparagine 33, and asparagine 111. A 1-deoxy-D-xylulose 5-phosphate-binding site is contributed by lysine 112. Glutamate 113 lines the NADPH pocket. Aspartate 131 serves as a coordination point for Mn(2+). Positions 132, 133, 155, and 178 each coordinate 1-deoxy-D-xylulose 5-phosphate. Residue glutamate 133 coordinates Mn(2+). Position 184 (glycine 184) interacts with NADPH. The 1-deoxy-D-xylulose 5-phosphate site is built by serine 191, asparagine 196, lysine 197, and glutamate 200. Glutamate 200 is a binding site for Mn(2+).

It belongs to the DXR family. It depends on Mg(2+) as a cofactor. Mn(2+) is required as a cofactor.

It catalyses the reaction 2-C-methyl-D-erythritol 4-phosphate + NADP(+) = 1-deoxy-D-xylulose 5-phosphate + NADPH + H(+). The protein operates within isoprenoid biosynthesis; isopentenyl diphosphate biosynthesis via DXP pathway; isopentenyl diphosphate from 1-deoxy-D-xylulose 5-phosphate: step 1/6. In terms of biological role, catalyzes the NADPH-dependent rearrangement and reduction of 1-deoxy-D-xylulose-5-phosphate (DXP) to 2-C-methyl-D-erythritol 4-phosphate (MEP). The sequence is that of 1-deoxy-D-xylulose 5-phosphate reductoisomerase from Campylobacter hominis (strain ATCC BAA-381 / DSM 21671 / CCUG 45161 / LMG 19568 / NCTC 13146 / CH001A).